The primary structure comprises 288 residues: 4-hydroxybenzoate octaprenyltransferase (288 aa).

8 helical membrane passes run 23 to 43 (IGSL…GKGI), 46 to 66 (TKIL…GCVV), 98 to 118 (ILFV…NSMT), 141 to 161 (LPQV…FAAV), 165 to 185 (LPLV…AYDT), 213 to 233 (LIIG…GWLM), 234 to 254 (NLGG…VHQQ), and 268 to 288 (AFLN…ISYL).

Belongs to the UbiA prenyltransferase family. The cofactor is Mg(2+).

It is found in the cell inner membrane. The catalysed reaction is all-trans-octaprenyl diphosphate + 4-hydroxybenzoate = 4-hydroxy-3-(all-trans-octaprenyl)benzoate + diphosphate. The protein operates within cofactor biosynthesis; ubiquinone biosynthesis. In terms of biological role, catalyzes the prenylation of para-hydroxybenzoate (PHB) with an all-trans polyprenyl group. Mediates the second step in the final reaction sequence of ubiquinone-8 (UQ-8) biosynthesis, which is the condensation of the polyisoprenoid side chain with PHB, generating the first membrane-bound Q intermediate 3-octaprenyl-4-hydroxybenzoate. This chain is 4-hydroxybenzoate octaprenyltransferase, found in Yersinia enterocolitica serotype O:8 / biotype 1B (strain NCTC 13174 / 8081).